The sequence spans 409 residues: Coagulation factor IX (409 aa).

Y1, N2, E7, E8, E16, E18, E21, E22, E27, E28, and E31 together coordinate Ca(2+). The 47-residue stretch at 1-47 (YNSGKLEESFVRGNLERECIEEKCSFEEAREVFENTEKTNEFWKQYV) folds into the Gla domain. E7, E8, E16, E18, E21, E22, E27, E28, E31, E34, E37, and E41 each carry 4-carboxyglutamate. E16 contributes to the Mg(2+) binding site. C19 and C24 form a disulfide bridge. Residue E21 coordinates Mg(2+). E27 lines the Mg(2+) pocket. E31 contributes to the Mg(2+) binding site. Positions 37, 41, 48, 49, and 51 each coordinate Ca(2+). Positions 37 and 41 each coordinate Mg(2+). The 37-residue stretch at 48 to 84 (DGDQCEPNPCLNGGLCKDDINSYECWCQVGFEGKNCE) folds into the EGF-like 1; calcium-binding domain. Intrachain disulfides connect C52-C63, C57-C72, C74-C83, C89-C100, C96-C110, C112-C125, C133-C291, C208-C224, C338-C352, and C363-C391. Positions 65 and 66 each coordinate Ca(2+). D65 is modified ((3R)-3-hydroxyaspartate). The residue at position 69 (S69) is a Phosphoserine. One can recognise an EGF-like 2 domain in the interval 85-126 (LDATCNIKNGRCKQFCKTGADSKVLCSCTTGYRLAPDQKSCK). Positions 148 to 182 (AEIIFSNMDYENSTEVEPILDSLTESNQSSDDFIR) are cleaved as a propeptide — activation peptide. Sulfotyrosine is present on Y157. The residue at position 160 (S160) is a Phosphoserine. Phosphothreonine; alternate is present on T161. T161 carries an O-linked (GalNAc...) threonine; alternate glycan. O-linked (GalNAc...) threonine glycosylation is present at T171. N174 carries N-linked (GlcNAc...) asparagine glycosylation. The 227-residue stretch at 183–409 (IVGGENAKPG…YTKVSRYVNW (227 aa)) folds into the Peptidase S1 domain. The Charge relay system role is filled by H223. Residues E237, N239, E242, E244, and E247 each coordinate Ca(2+). N262 is a glycosylation site (N-linked (GlcNAc...) asparagine). D271 acts as the Charge relay system in catalysis. S367 (charge relay system) is an active-site residue.

The protein belongs to the peptidase S1 family. Heterodimer of a light chain and a heavy chain; disulfide-linked. Interacts (inactive and activated) with F11 (activated) in calcium-dependent manner. Interacts with SERPINC1. In terms of processing, activated by factor XIa, which excises the activation peptide. The propeptide can also be removed by snake venom protease. Activated by coagulation factor VIIa-tissue factor (F7-F3) complex in calcium-dependent manner. Post-translationally, the iron and 2-oxoglutarate dependent 3-hydroxylation of aspartate and asparagine is (R) stereospecific within EGF domains.

It is found in the secreted. It catalyses the reaction Selective cleavage of Arg-|-Ile bond in factor X to form factor Xa.. Functionally, factor IX is a vitamin K-dependent plasma protein that participates in the intrinsic pathway of blood coagulation by converting factor X to its active form in the presence of Ca(2+) ions, phospholipids, and factor VIIIa. The chain is Coagulation factor IX (F9) from Sus scrofa (Pig).